A 76-amino-acid polypeptide reads, in one-letter code: ATP synthase subunit c (76 aa).

The next 2 membrane-spanning stretches (helical) occupy residues 5–25 (GIIA…GIGI) and 54–74 (AALA…LVFL).

It belongs to the ATPase C chain family. In terms of assembly, F-type ATPases have 2 components, F(1) - the catalytic core - and F(0) - the membrane proton channel. F(1) has five subunits: alpha(3), beta(3), gamma(1), delta(1), epsilon(1). F(0) has three main subunits: a(1), b(2) and c(10-14). The alpha and beta chains form an alternating ring which encloses part of the gamma chain. F(1) is attached to F(0) by a central stalk formed by the gamma and epsilon chains, while a peripheral stalk is formed by the delta and b chains.

Its subcellular location is the cell membrane. In terms of biological role, f(1)F(0) ATP synthase produces ATP from ADP in the presence of a proton or sodium gradient. F-type ATPases consist of two structural domains, F(1) containing the extramembraneous catalytic core and F(0) containing the membrane proton channel, linked together by a central stalk and a peripheral stalk. During catalysis, ATP synthesis in the catalytic domain of F(1) is coupled via a rotary mechanism of the central stalk subunits to proton translocation. Key component of the F(0) channel; it plays a direct role in translocation across the membrane. A homomeric c-ring of between 10-14 subunits forms the central stalk rotor element with the F(1) delta and epsilon subunits. This Ruminiclostridium cellulolyticum (strain ATCC 35319 / DSM 5812 / JCM 6584 / H10) (Clostridium cellulolyticum) protein is ATP synthase subunit c.